The primary structure comprises 670 residues: ATP synthase subunit alpha 2 (670 aa).

180–187 (GDRATGKT) contacts ATP. The tract at residues 525–670 (MPAEDAAGDI…DAEAEARHKR (146 aa)) is disordered. A compositionally biased stretch (basic and acidic residues) spans 543–588 (ARGDADRDADHGANREVSREVSPEASREVSREVSREVSHEADRDAA). The span at 589 to 599 (ADAARVAGRAP) shows a compositional bias: low complexity. The segment covering 621 to 639 (ADGDRASASRPPPDARGDA) has biased composition (basic and acidic residues). Positions 650–661 (ADANVNADANVD) are enriched in low complexity.

This sequence belongs to the ATPase alpha/beta chains family. As to quaternary structure, F-type ATPases have 2 components, CF(1) - the catalytic core - and CF(0) - the membrane proton channel. CF(1) has five subunits: alpha(3), beta(3), gamma(1), delta(1), epsilon(1). CF(0) has three main subunits: a(1), b(2) and c(9-12). The alpha and beta chains form an alternating ring which encloses part of the gamma chain. CF(1) is attached to CF(0) by a central stalk formed by the gamma and epsilon chains, while a peripheral stalk is formed by the delta and b chains.

It localises to the cell inner membrane. The catalysed reaction is ATP + H2O + 4 H(+)(in) = ADP + phosphate + 5 H(+)(out). In terms of biological role, produces ATP from ADP in the presence of a proton gradient across the membrane. The alpha chain is a regulatory subunit. In Burkholderia mallei (strain NCTC 10247), this protein is ATP synthase subunit alpha 2.